The chain runs to 208 residues: Small ribosomal subunit protein uS5 (208 aa).

Polar residues predominate over residues 1–15; the sequence is MTDSNNQSPNKKTSG. The segment at 1 to 54 is disordered; sequence MTDSNNQSPNKKTSGSSSAPPAADGRQENRRSRGEKRGGRRDRRGQERDSEWQE. Composition is skewed to basic and acidic residues over residues 25-37 and 44-54; these read GRQENRRSRGEKR and RGQERDSEWQE. An S5 DRBM domain is found at 52–115; it reads WQERVVQIRR…ADGKKHLVRV (64 aa).

It belongs to the universal ribosomal protein uS5 family. Part of the 30S ribosomal subunit. Contacts proteins S4 and S8.

Functionally, with S4 and S12 plays an important role in translational accuracy. In terms of biological role, located at the back of the 30S subunit body where it stabilizes the conformation of the head with respect to the body. The sequence is that of Small ribosomal subunit protein uS5 from Prochlorococcus marinus (strain NATL2A).